The sequence spans 255 residues: Syntaxin-6 (255 aa).

The residue at position 2 (serine 2) is an N-acetylserine. Residue serine 2 is modified to Phosphoserine. The interval 2-112 (SMEDPFFVVK…KDQMSASSVQ (111 aa)) is interaction with BLTP3B. The interval 2–168 (SMEDPFFVVK…QAQQQLIVEQ (167 aa)) is required for interaction with VPS51. Over 2-234 (SMEDPFFVVK…VSHMTSDRRQ (233 aa)) the chain is Cytoplasmic. Positions 41–74 (EEIDWTTNELRNNLRSIEWDLEDLDETISIVEAN) form a coiled coil. A phosphoserine mark is found at serine 129 and serine 152. Residues 163–225 (QLIVEQQDEQ…DNVMKKLAKV (63 aa)) enclose the t-SNARE coiled-coil homology domain. The chain crosses the membrane as a helical; Anchor for type IV membrane protein span at residues 235–255 (WCAIAILFAVLLVVLTLFLVL).

It belongs to the syntaxin family. As to quaternary structure, identified in a complex containing STX6, STX12, VAMP4 and VTI1A. Binds EEA1. Interacts with VPS45A and GOPC. Interacts with MARCHF2; the interaction promotes MARCHF2-mediated ubiquitination and degradation of CFTR. Interacts with MARCHF3. Interacts with BLTP3B (via C-terminal coiled-coil domain). Interacts with BAIAP3; this interaction is increased in the presence of calcium. Interacts (via N-terminus) with VPS51. Interacts with VPS13B. In terms of tissue distribution, widely expressed, with relatively higher expression in brain, lung and kidney.

The protein resides in the golgi apparatus membrane. Its subcellular location is the golgi apparatus. It localises to the trans-Golgi network membrane. It is found in the recycling endosome membrane. Functionally, SNARE promoting movement of transport vesicles to target membranes. Targets endosomes to the trans-Golgi network, and may therefore function in retrograde trafficking. Together with SNARE STX12, promotes movement of vesicles from endosomes to the cell membrane, and may therefore function in the endocytic recycling pathway. In Rattus norvegicus (Rat), this protein is Syntaxin-6 (Stx6).